The chain runs to 185 residues: Threonylcarbamoyl-AMP synthase (185 aa).

One can recognise a YrdC-like domain in the interval 4 to 185 (SFRAQCAARV…LVTGQVIRPA (182 aa)).

Belongs to the SUA5 family. TsaC subfamily.

The protein resides in the cytoplasm. It carries out the reaction L-threonine + hydrogencarbonate + ATP = L-threonylcarbamoyladenylate + diphosphate + H2O. Its function is as follows. Required for the formation of a threonylcarbamoyl group on adenosine at position 37 (t(6)A37) in tRNAs that read codons beginning with adenine. Catalyzes the conversion of L-threonine, HCO(3)(-)/CO(2) and ATP to give threonylcarbamoyl-AMP (TC-AMP) as the acyladenylate intermediate, with the release of diphosphate. This Pseudomonas paraeruginosa (strain DSM 24068 / PA7) (Pseudomonas aeruginosa (strain PA7)) protein is Threonylcarbamoyl-AMP synthase.